The following is a 536-amino-acid chain: Membrane protein insertase YidC (536 aa).

A helical membrane pass occupies residues 7–27; it reads IIAVVLSLFVLIGWSYLSEFM. The segment at 43–70 is disordered; it reads VQQKASEPVAQPVQTASAPAASSFAPTE. Over residues 58-68 the composition is skewed to low complexity; the sequence is ASAPAASSFAP. Helical transmembrane passes span 346-366, 415-435, and 495-515; these read GNYG…FWPL, GGCL…QGLL, and IMMF…AGLV.

The protein belongs to the OXA1/ALB3/YidC family. Type 1 subfamily. In terms of assembly, interacts with the Sec translocase complex via SecD. Specifically interacts with transmembrane segments of nascent integral membrane proteins during membrane integration.

The protein resides in the cell inner membrane. Functionally, required for the insertion and/or proper folding and/or complex formation of integral membrane proteins into the membrane. Involved in integration of membrane proteins that insert both dependently and independently of the Sec translocase complex, as well as at least some lipoproteins. Aids folding of multispanning membrane proteins. This Oleidesulfovibrio alaskensis (strain ATCC BAA-1058 / DSM 17464 / G20) (Desulfovibrio alaskensis) protein is Membrane protein insertase YidC.